Here is a 314-residue protein sequence, read N- to C-terminus: tRNA pseudouridine synthase B (314 aa).

Asp47 (nucleophile) is an active-site residue.

This sequence belongs to the pseudouridine synthase TruB family. Type 1 subfamily.

It catalyses the reaction uridine(55) in tRNA = pseudouridine(55) in tRNA. Its function is as follows. Responsible for synthesis of pseudouridine from uracil-55 in the psi GC loop of transfer RNAs. This is tRNA pseudouridine synthase B from Vibrio vulnificus (strain CMCP6).